A 1311-amino-acid polypeptide reads, in one-letter code: MKGNRRQPAVASQPTSPASPTPSKGTSKYANRDGSKIISVPKPSLSVETPQPSPTVSASMPPPTAGKGQPPSTAPTAPSGSNASGGEAAPTVNRKKAKRRAKLAAKAAAEAGLSGDNLSNGVAAHSASSSLPKQPSDAGHSDNEGEALSRPSQTNGHTSTGASKSKKGRKSKNEDGRFMDSAGSATGSNHHAEMRRPPSPIPHASPGRASGISKEKIWNTSSQEERQRIKEFWLGLGEEERKSLVKVEKDAVLKKMKEQQKQTCSCTVCGRKRTAIEEELEGLYDAYYEELESFANQPNPNGDVPPMLGPTGHFGSTAYTSQIMPSKYPPRQPSRGRIVEHCGDDEDDDGEDEYSEEELDDDEDYSDDEEPEEMHRQRPTEYQTDFFNFGNSLTVQGTRFHESLNSLPPYAKSYMEQVLKYVFRRDVDHSLGGILTVADDLLKNDGKKFIEMMEQLAERRMQREEDAKEQFARNYHINGNNYPAHAHPPPPEDDEEYEDEEEEEEYDSQDEEYDEEEVQTNPVHCACHCPCRGGDYGDAGMSASADDGSYQDHGQESHAKQHRHLQDSMTEEQRMEEGRRMFQIFAARMFEQRVLTAYREKVAKERQEKLLEELAQEDRETEKRKAKKQKEAQKRRDKALQKKQAQAEEKARKDAEKAAEEAERLAEEQRRQEEQRQKNEERKKKKEAQRKAEEEERQRKEAERLRRAQEQKERQAEQDRKAREAKEKEKKAKEEAKQREKAARELKEREARERKEKADKERLEKEAKIKAEKEAREAQRKAERASQKATTLANVPVPTGPARRQSQAPNPAPALPQSQQASVASPQLPTAVPALPKLPTPQKPRRTSQQEPFTSGFAAQQVHGQGAGQYPAPPKAATPVHTSPGPGGLLSKGSSSQGQSLHSQATSPLGTSLPTSTSLPTPFGMPHPPPNQHYPPGIGPLNAPPGLGGPRLFNDYPEQMYQQSPFGFRQATQQHPQLPPGLGIPMGPGRGLGHGPPPPPGLSAQQSDFPNMPASIFGSIPKEPSPLSSHSRQASANFDSPIAATPIARPTPIGRPGSVVQGRRGSSDSPGRPGQPGQDNLEEISAPHLGSSALLDDLDEPLMDDFMQDTRSARRSIPGPPQSSRFPPPAVGSFPMSNSPFGPSLWSQPGPSLVNQGFGGSFGQPAPPPGFNSLSDALSVNSPWTFASRPPPRHNLPQMRKVLIQACLDLASTKTPLLDEKAEDPSRRYLPITAVKKCVDTKFASGSTFTVDDLMSMTNTEGNANNGGGSFDTQEFDGELCVRWVPDDIGDSRTVGRSVGEIGSPIVGSRG.

Disordered regions lie at residues 1–226 (MKGN…QEER), 308–379 (LGPT…RQRP), 478–521 (NGNN…VQTN), 542–576 (SASA…QRME), and 613–1083 (ELAQ…NLEE). Positions 8-27 (PAVASQPTSPASPTPSKGTS) are enriched in low complexity. Over residues 46-58 (SVETPQPSPTVSA) the composition is skewed to polar residues. Over residues 68–86 (GQPPSTAPTAPSGSNASGG) the composition is skewed to low complexity. Residues 93-103 (NRKKAKRRAKL) show a composition bias toward basic residues. Residues 116-133 (DNLSNGVAAHSASSSLPK) show a composition bias toward polar residues. The span at 213–226 (SKEKIWNTSSQEER) shows a compositional bias: basic and acidic residues. Acidic residues-rich tracts occupy residues 343–372 (GDDE…EEPE) and 491–518 (PEDD…EEEV). Residues 450–521 (IEMMEQLAER…EYDEEEVQTN (72 aa)) adopt a coiled-coil conformation. Residues 599 to 795 (REKVAKERQE…SQKATTLANV (197 aa)) are a coiled coil. 2 stretches are compositionally biased toward basic and acidic residues: residues 613–682 (ELAQ…NEER) and 689–786 (QRKA…ERAS). Composition is skewed to low complexity over residues 805-829 (QSQA…PQLP) and 891-922 (SKGS…LPTP). Pro residues predominate over residues 923–933 (FGMPHPPPNQH). Positions 934–945 (YPPGIGPLNAPP) are enriched in low complexity. A compositionally biased stretch (polar residues) spans 960-975 (MYQQSPFGFRQATQQH). The segment covering 984–994 (IPMGPGRGLGH) has biased composition (gly residues). Residues 1026-1038 (PLSSHSRQASANF) show a composition bias toward polar residues. A compositionally biased stretch (low complexity) spans 1041–1052 (PIAATPIARPTP).

Belongs to the NST1 family.

The protein resides in the cytoplasm. May act as a negative regulator of salt tolerance. The sequence is that of Stress response protein NST1 (NST1) from Pyricularia oryzae (strain 70-15 / ATCC MYA-4617 / FGSC 8958) (Rice blast fungus).